The sequence spans 252 residues: Trans-aconitate 2-methyltransferase (252 aa).

This sequence belongs to the methyltransferase superfamily. Tam family.

The protein localises to the cytoplasm. It catalyses the reaction trans-aconitate + S-adenosyl-L-methionine = (E)-3-(methoxycarbonyl)pent-2-enedioate + S-adenosyl-L-homocysteine. Catalyzes the S-adenosylmethionine monomethyl esterification of trans-aconitate. This is Trans-aconitate 2-methyltransferase from Shigella dysenteriae serotype 1 (strain Sd197).